The primary structure comprises 229 residues: Potassium/proton antiporter CemA (229 aa).

Helical transmembrane passes span 6–26, 107–127, and 189–209; these read AFIP…ISLC, ILHF…SFWG, and ILSG…KYWI.

It belongs to the CemA family.

It is found in the plastid. The protein resides in the chloroplast inner membrane. It carries out the reaction K(+)(in) + H(+)(out) = K(+)(out) + H(+)(in). Functionally, contributes to K(+)/H(+) antiport activity by supporting proton efflux to control proton extrusion and homeostasis in chloroplasts in a light-dependent manner to modulate photosynthesis. Prevents excessive induction of non-photochemical quenching (NPQ) under continuous-light conditions. Indirectly promotes efficient inorganic carbon uptake into chloroplasts. In Barbarea verna (Land cress), this protein is Potassium/proton antiporter CemA.